A 364-amino-acid polypeptide reads, in one-letter code: Alanine racemase (364 aa).

Catalysis depends on K34, which acts as the Proton acceptor; specific for D-alanine. The residue at position 34 (K34) is an N6-(pyridoxal phosphate)lysine. Substrate is bound at residue R129. Residue Y259 is the Proton acceptor; specific for L-alanine of the active site. M307 lines the substrate pocket.

The protein belongs to the alanine racemase family. It depends on pyridoxal 5'-phosphate as a cofactor.

It catalyses the reaction L-alanine = D-alanine. The protein operates within amino-acid biosynthesis; D-alanine biosynthesis; D-alanine from L-alanine: step 1/1. Its function is as follows. Catalyzes the interconversion of L-alanine and D-alanine. May also act on other amino acids. The chain is Alanine racemase (alr) from Coxiella burnetii (strain CbuG_Q212) (Coxiella burnetii (strain Q212)).